Here is a 685-residue protein sequence, read N- to C-terminus: Amino acid transporter heavy chain SLC3A1 (685 aa).

Basic and acidic residues predominate over residues M1–I11. The interval M1–E56 is disordered. Topologically, residues M1–E87 are cytoplasmic. The residue at position 10 (S10) is a Phosphoserine. The helical; Signal-anchor for type II membrane protein transmembrane segment at I88–I108 threads the bilayer. The Extracellular portion of the chain corresponds to A109–C685. N214 contributes to the Ca(2+) binding site. N-linked (GlcNAc...) asparagine glycosylation is found at N214 and N261. C242 and C273 are disulfide-bonded. The Ca(2+) site is built by D284, F318, L319, and E321. N-linked (GlcNAc...) asparagine glycosylation is found at N332, N495, N513, and N575. Disulfide bonds link C571/C666 and C673/C685.

Disulfide-linked heterodimer composed of the catalytic light subunit SLC7A9 and the heavy subunit SLC3A1. The heterodimer is the minimal functional unit. Assembles in non-covalently linked heterotetramers (dimers of heterodimers) and higher order oligomers; the oligomerization is mediated by SLC3A1 likely to prevent degradation in the endoplasmic reticulum and facilitate heteromer trafficking to the plasma membrane. Disulfide-linked heterodimer composed of the catalytic light subunit SLC7A13 and the heavy subunit SLC3A1. As to expression, expressed in the brush border membrane in the kidney (at protein level). Predominantly expressed in the kidney, small intestine and pancreas. Weakly expressed in liver.

The protein localises to the cell membrane. It localises to the apical cell membrane. Functionally, acts as a chaperone that facilitates biogenesis and trafficking of functional transporter heteromers to the plasma membrane. Associates with SLC7A9 to form a functional transporter complex that mediates the electrogenic exchange between cationic amino acids and neutral amino acids, with a stoichiometry of 1:1. SLC7A9-SLC3A1 transporter has system b(0,+)-like activity with high affinity for extracellular cationic amino acids and L-cystine and lower affinity for intracellular neutral amino acids. Substrate exchange is driven by high concentration of intracellular neutral amino acids and the intracellular reduction of L-cystine to L-cysteine. SLC7A9-SLC3A1 acts as a major transporter for reabsorption of L-cystine and dibasic amino acids across the brush border membrane in early proximal tubules. Associates with SLC7A13 to form a functional complex that transports anionic and neutral amino acids via exchange or facilitated diffusion. SLC7A13-SLC3A1 may act as a major transporter for L-cystine in late proximal tubules, ensuring its reabsorption from the luminal fluid in exchange for cytosolic L-glutamate or L-aspartate. The chain is Amino acid transporter heavy chain SLC3A1 from Homo sapiens (Human).